We begin with the raw amino-acid sequence, 326 residues long: Interleukin-1-binding protein (326 aa).

An N-terminal signal peptide occupies residues 1–18 (MSIPPVIFLPIFFYSSFV). 3 Ig-like C2-type domains span residues 24–115 (PECI…LNLT), 122–208 (SNID…YDVT), and 221–322 (PPTM…KTVT). Cysteine 48 and cysteine 99 are oxidised to a cystine. N-linked (GlcNAc...) asparagine; by host glycosylation is found at asparagine 80, asparagine 103, and asparagine 113. Cysteine 143 and cysteine 194 are disulfide-bonded. Asparagine 237 is a glycosylation site (N-linked (GlcNAc...) asparagine; by host). An intrachain disulfide couples cysteine 242 to cysteine 309.

Belongs to the interleukin-1 receptor family. As to quaternary structure, interacts with mouse Il1b.

It is found in the secreted. May reduce the host inflammatory response by interacting with inteleukin-1 beta (Il1b) and thus decreasing the association between IL1B and its cellular receptor. This is Interleukin-1-binding protein (OPG201) from Bos taurus (Bovine).